Consider the following 704-residue polypeptide: Inhibitor of carbonic anhydrase (704 aa).

The N-terminal stretch at 1–19 (MRLAFCVLLCAGSLGLCLA) is a signal peptide. 2 consecutive Transferrin-like domains span residues 25-347 (VRWC…HLRR) and 357-689 (VMWC…NVRQ). Cystine bridges form between Cys-28/Cys-67, Cys-38/Cys-58, Cys-137/Cys-213, Cys-172/Cys-188, Cys-175/Cys-196, Cys-185/Cys-198, Cys-246/Cys-260, Cys-360/Cys-392, Cys-370/Cys-383, Cys-417/Cys-699, Cys-440/Cys-662, Cys-472/Cys-549, Cys-496/Cys-690, Cys-506/Cys-520, Cys-517/Cys-532, and Cys-589/Cys-603. N-linked (GlcNAc...) asparagine glycosylation is present at Asn-491.

The protein belongs to the transferrin family. Monomer. Interacts (via transferrin-like domain 2) with CA2. Post-translationally, N-glycosylated. In terms of tissue distribution, blood plasma (at protein level).

Its subcellular location is the secreted. Functionally, inhibitor for carbonic anhydrase 2 (CA2). Does not bind iron ions. The sequence is that of Inhibitor of carbonic anhydrase from Sus scrofa (Pig).